The primary structure comprises 215 residues: LexA repressor (215 aa).

The H-T-H motif DNA-binding region spans 28–48 (RAEIAAELGFSSPNAAEEHLR). Catalysis depends on for autocatalytic cleavage activity residues Ser133 and Lys170.

The protein belongs to the peptidase S24 family. In terms of assembly, homodimer.

The enzyme catalyses Hydrolysis of Ala-|-Gly bond in repressor LexA.. Its function is as follows. Represses a number of genes involved in the response to DNA damage (SOS response), including recA and lexA. In the presence of single-stranded DNA, RecA interacts with LexA causing an autocatalytic cleavage which disrupts the DNA-binding part of LexA, leading to derepression of the SOS regulon and eventually DNA repair. In Burkholderia ambifaria (strain ATCC BAA-244 / DSM 16087 / CCUG 44356 / LMG 19182 / AMMD) (Burkholderia cepacia (strain AMMD)), this protein is LexA repressor.